Here is a 149-residue protein sequence, read N- to C-terminus: Putative pre-16S rRNA nuclease (149 aa).

This sequence belongs to the YqgF nuclease family.

It is found in the cytoplasm. In terms of biological role, could be a nuclease involved in processing of the 5'-end of pre-16S rRNA. In Pseudoalteromonas translucida (strain TAC 125), this protein is Putative pre-16S rRNA nuclease.